The sequence spans 1423 residues: DNA-directed RNA polymerase subunit beta' (1423 aa).

Zn(2+) contacts are provided by C71, C73, C86, and C89. The Mg(2+) site is built by D461, D463, and D465. C815, C889, C896, and C899 together coordinate Zn(2+).

It belongs to the RNA polymerase beta' chain family. The RNAP catalytic core consists of 2 alpha, 1 beta, 1 beta' and 1 omega subunit. When a sigma factor is associated with the core the holoenzyme is formed, which can initiate transcription. Mg(2+) serves as cofactor. Requires Zn(2+) as cofactor.

It catalyses the reaction RNA(n) + a ribonucleoside 5'-triphosphate = RNA(n+1) + diphosphate. In terms of biological role, DNA-dependent RNA polymerase catalyzes the transcription of DNA into RNA using the four ribonucleoside triphosphates as substrates. This Actinobacillus pleuropneumoniae serotype 3 (strain JL03) protein is DNA-directed RNA polymerase subunit beta'.